The sequence spans 968 residues: RNA polymerase-associated protein RapA (968 aa).

Residues 164–334 (DVGRRHAPRV…FARLRLLDPN (171 aa)) enclose the Helicase ATP-binding domain. 177-184 (DEVGLGKT) provides a ligand contact to ATP. The short motif at 280 to 283 (DEAH) is the DEAH box element. In terms of domain architecture, Helicase C-terminal spans 490–685 (RVEWLMGYLT…ALKAQLEQGR (196 aa)).

Belongs to the SNF2/RAD54 helicase family. RapA subfamily. Interacts with the RNAP. Has a higher affinity for the core RNAP than for the holoenzyme. Its ATPase activity is stimulated by binding to RNAP.

Transcription regulator that activates transcription by stimulating RNA polymerase (RNAP) recycling in case of stress conditions such as supercoiled DNA or high salt concentrations. Probably acts by releasing the RNAP, when it is trapped or immobilized on tightly supercoiled DNA. Does not activate transcription on linear DNA. Probably not involved in DNA repair. The polypeptide is RNA polymerase-associated protein RapA (Salmonella paratyphi A (strain ATCC 9150 / SARB42)).